A 56-amino-acid polypeptide reads, in one-letter code: Large ribosomal subunit protein bL32 (56 aa).

Residues 1-16 are compositionally biased toward basic residues; the sequence is MAVQKNKKSRSKRGMR. The segment at 1–36 is disordered; it reads MAVQKNKKSRSKRGMRRSHDSLSTPQLSVDSTSGEL. Over residues 21–34 the composition is skewed to polar residues; it reads SLSTPQLSVDSTSG.

This sequence belongs to the bacterial ribosomal protein bL32 family.

This chain is Large ribosomal subunit protein bL32, found in Shewanella sediminis (strain HAW-EB3).